The chain runs to 71 residues: Ceratotoxin-A (71 aa).

Residues 1-23 (MANLKAVFLICIVAFIALQCVVA) form the signal peptide. 2 consecutive propeptides follow at residues 24–35 (EPAAEDSVVVKR) and 65–71 (VAAGLVG).

As to quaternary structure, homomer of four to six subunits.

The protein localises to the secreted. Functionally, female-specific peptides with potent activity against Gram-positive and Gram-negative bacteria. They have as well hemolytic activity. The chain is Ceratotoxin-A (CTXA1) from Ceratitis capitata (Mediterranean fruit fly).